The chain runs to 441 residues: 4-alpha-glucanotransferase (441 aa).

D13, N15, D17, V19, and D21 together coordinate Ca(2+). D186 acts as the Nucleophile in catalysis. E216 functions as the Proton donor in the catalytic mechanism.

This sequence belongs to the glycosyl hydrolase 13 family. Monomer. Requires Ca(2+) as cofactor.

The protein localises to the cytoplasm. It catalyses the reaction Transfers a segment of a (1-&gt;4)-alpha-D-glucan to a new position in an acceptor, which may be glucose or a (1-&gt;4)-alpha-D-glucan.. The polypeptide is 4-alpha-glucanotransferase (mgtA) (Thermotoga maritima (strain ATCC 43589 / DSM 3109 / JCM 10099 / NBRC 100826 / MSB8)).